We begin with the raw amino-acid sequence, 555 residues long: Esterase-5A (555 aa).

An N-terminal signal peptide occupies residues 1 to 19 (MHLVRWLICLIQLWIQLGA). Cysteines 87 and 106 form a disulfide. N-linked (GlcNAc...) asparagine glycosylation is found at N95 and N116. The Acyl-ester intermediate role is filled by S210. A disulfide bridge links C262 with C274. N479 and N510 each carry an N-linked (GlcNAc...) asparagine glycan. C518 and C539 form a disulfide bridge.

It belongs to the type-B carboxylesterase/lipase family.

It is found in the secreted. The enzyme catalyses a carboxylic ester + H2O = an alcohol + a carboxylate + H(+). The chain is Esterase-5A (Est-5A) from Drosophila miranda (Fruit fly).